Reading from the N-terminus, the 292-residue chain is 2-methylisocitrate lyase (292 aa).

44–46 lines the substrate pocket; it reads SGA. Residues aspartate 84 and aspartate 86 each contribute to the Mg(2+) site. Substrate-binding positions include 121–122, arginine 156, glutamate 186, 208–210, arginine 239, and arginine 268; these read CG and NMT.

Belongs to the isocitrate lyase/PEP mutase superfamily. Methylisocitrate lyase family. In terms of assembly, homotetramer; dimer of dimers. The cofactor is Mg(2+).

The catalysed reaction is (2S,3R)-3-hydroxybutane-1,2,3-tricarboxylate = pyruvate + succinate. It participates in organic acid metabolism; propanoate degradation. Involved in the catabolism of short chain fatty acids (SCFA) via the 2-methylcitrate cycle I (propionate degradation route). Catalyzes the thermodynamically favored C-C bond cleavage of (2R,3S)-2-methylisocitrate to yield pyruvate and succinate via an alpha-carboxy-carbanion intermediate. In Shewanella oneidensis (strain ATCC 700550 / JCM 31522 / CIP 106686 / LMG 19005 / NCIMB 14063 / MR-1), this protein is 2-methylisocitrate lyase.